The following is a 366-amino-acid chain: Peroxisomal (S)-2-hydroxy-acid oxidase GLO4 (366 aa).

The 360-residue stretch at 1–360 folds into the FMN hydroxy acid dehydrogenase domain; that stretch reads MEDNLPVNVR…TRSHVMTEGD (360 aa). Tyr-27 contacts a 2-oxocarboxylate. FMN contacts are provided by residues 80-82, Ser-109, 130-132, and Thr-158; these read PTG and QLY. Tyr-132 contacts a 2-oxocarboxylate. Arg-167 contacts a 2-oxocarboxylate. Positions 231 and 253 each coordinate FMN. Residue His-255 is the Proton acceptor of the active site. Arg-258 lines the a 2-oxocarboxylate pocket. FMN contacts are provided by residues 286 to 290 and 309 to 310; these read DGGIR and XX. A Microbody targeting signal motif is present at residues 364–366; it reads SLL.

It belongs to the FMN-dependent alpha-hydroxy acid dehydrogenase family. As to quaternary structure, homotetramer. FMN serves as cofactor.

The protein resides in the peroxisome. It catalyses the reaction a (2S)-2-hydroxycarboxylate + O2 = a 2-oxocarboxylate + H2O2. It participates in lipid metabolism; fatty acid metabolism. Functionally, oxidase that catalyzes the oxidation of a broad range of 2-hydroxyacids to the corresponding 2-oxoacids, with a reduction of O2 to H2O2. May be involved in a general medium- and long-chain fatty acid catabolic pathway such as alpha-oxidation. This chain is Peroxisomal (S)-2-hydroxy-acid oxidase GLO4 (GLO4), found in Oryza sativa subsp. indica (Rice).